We begin with the raw amino-acid sequence, 387 residues long: Erythronate-4-phosphate dehydrogenase (387 aa).

Positions 45 and 67 each coordinate substrate. Aspartate 147 contacts NAD(+). The active site involves arginine 208. Aspartate 232 contacts NAD(+). The active site involves glutamate 237. Residue histidine 254 is the Proton donor of the active site. Glycine 257 lines the NAD(+) pocket. Position 258 (tyrosine 258) interacts with substrate.

Belongs to the D-isomer specific 2-hydroxyacid dehydrogenase family. PdxB subfamily. As to quaternary structure, homodimer.

The protein resides in the cytoplasm. The enzyme catalyses 4-phospho-D-erythronate + NAD(+) = (R)-3-hydroxy-2-oxo-4-phosphooxybutanoate + NADH + H(+). The protein operates within cofactor biosynthesis; pyridoxine 5'-phosphate biosynthesis; pyridoxine 5'-phosphate from D-erythrose 4-phosphate: step 2/5. Its function is as follows. Catalyzes the oxidation of erythronate-4-phosphate to 3-hydroxy-2-oxo-4-phosphonooxybutanoate. The polypeptide is Erythronate-4-phosphate dehydrogenase (Shewanella violacea (strain JCM 10179 / CIP 106290 / LMG 19151 / DSS12)).